A 404-amino-acid polypeptide reads, in one-letter code: Acetate kinase (404 aa).

Mg(2+) is bound at residue Asn7. Residue Lys14 participates in ATP binding. Substrate is bound at residue Arg95. Residue Asp152 is the Proton donor/acceptor of the active site. ATP contacts are provided by residues 212–216, 286–288, and 334–338; these read HLGNG, DMR, and GIGEN. Position 388 (Glu388) interacts with Mg(2+).

Belongs to the acetokinase family. Homodimer. Mg(2+) serves as cofactor. Mn(2+) is required as a cofactor.

It is found in the cytoplasm. The catalysed reaction is acetate + ATP = acetyl phosphate + ADP. The protein operates within metabolic intermediate biosynthesis; acetyl-CoA biosynthesis; acetyl-CoA from acetate: step 1/2. In terms of biological role, catalyzes the formation of acetyl phosphate from acetate and ATP. Can also catalyze the reverse reaction. The polypeptide is Acetate kinase (Nitratidesulfovibrio vulgaris (strain DSM 19637 / Miyazaki F) (Desulfovibrio vulgaris)).